We begin with the raw amino-acid sequence, 428 residues long: Adenylosuccinate synthetase (428 aa).

GTP is bound by residues 12–18 (GDEGKGK) and 40–42 (GHT). The Proton acceptor role is filled by aspartate 13. The Mg(2+) site is built by aspartate 13 and glycine 40. Residues 13–16 (DEGK), 38–41 (NAGH), threonine 129, arginine 143, glutamine 224, threonine 239, and arginine 303 contribute to the IMP site. Residue histidine 41 is the Proton donor of the active site. Position 299–305 (299–305 (VTTGRIR)) interacts with substrate. GTP-binding positions include arginine 305, 331–333 (KVD), and 410–412 (AYG).

It belongs to the adenylosuccinate synthetase family. In terms of assembly, homodimer. Mg(2+) serves as cofactor.

The protein localises to the cytoplasm. The catalysed reaction is IMP + L-aspartate + GTP = N(6)-(1,2-dicarboxyethyl)-AMP + GDP + phosphate + 2 H(+). It participates in purine metabolism; AMP biosynthesis via de novo pathway; AMP from IMP: step 1/2. Functionally, plays an important role in the de novo pathway of purine nucleotide biosynthesis. Catalyzes the first committed step in the biosynthesis of AMP from IMP. This chain is Adenylosuccinate synthetase, found in Francisella philomiragia subsp. philomiragia (strain ATCC 25017 / CCUG 19701 / FSC 153 / O#319-036).